The primary structure comprises 174 residues: Large ribosomal subunit protein uL5 (174 aa).

This sequence belongs to the universal ribosomal protein uL5 family. In terms of assembly, part of the 50S ribosomal subunit; contacts the 5S rRNA and probably tRNA. Forms a bridge to the 30S subunit in the 70S ribosome.

Functionally, this is one of the proteins that bind and probably mediate the attachment of the 5S RNA into the large ribosomal subunit, where it forms part of the central protuberance. In the 70S ribosome it contacts protein S13 of the 30S subunit (bridge B1b), connecting the 2 subunits; this bridge is implicated in subunit movement. May contact the P site tRNA; the 5S rRNA and some of its associated proteins might help stabilize positioning of ribosome-bound tRNAs. The polypeptide is Large ribosomal subunit protein uL5 (Halorubrum lacusprofundi (strain ATCC 49239 / DSM 5036 / JCM 8891 / ACAM 34)).